We begin with the raw amino-acid sequence, 343 residues long: Dihydroorotate dehydrogenase (quinone) (343 aa).

Residues 58-62 and Ser82 contribute to the FMN site; that span reads AGYDK. A substrate-binding site is contributed by Lys62. Residue 107–111 participates in substrate binding; the sequence is NRMGF. FMN contacts are provided by Asn136 and Asn167. Asn167 contributes to the substrate binding site. Ser170 (nucleophile) is an active-site residue. Asn172 lines the substrate pocket. FMN-binding residues include Lys206 and Ser234. 235–236 is a substrate binding site; that stretch reads NT. Residues Gly256, Gly285, and 306-307 contribute to the FMN site; that span reads YS.

This sequence belongs to the dihydroorotate dehydrogenase family. Type 2 subfamily. In terms of assembly, monomer. Requires FMN as cofactor.

The protein resides in the cell membrane. The enzyme catalyses (S)-dihydroorotate + a quinone = orotate + a quinol. It functions in the pathway pyrimidine metabolism; UMP biosynthesis via de novo pathway; orotate from (S)-dihydroorotate (quinone route): step 1/1. Catalyzes the conversion of dihydroorotate to orotate with quinone as electron acceptor. In Erythrobacter litoralis (strain HTCC2594), this protein is Dihydroorotate dehydrogenase (quinone).